A 287-amino-acid chain; its full sequence is NAD kinase (287 aa).

D66 serves as the catalytic Proton acceptor. NAD(+) contacts are provided by residues 66–67 (DG), 137–138 (ND), R148, R165, D167, and 178–183 (TAYSMS).

Belongs to the NAD kinase family. A divalent metal cation is required as a cofactor.

It localises to the cytoplasm. The catalysed reaction is NAD(+) + ATP = ADP + NADP(+) + H(+). Involved in the regulation of the intracellular balance of NAD and NADP, and is a key enzyme in the biosynthesis of NADP. Catalyzes specifically the phosphorylation on 2'-hydroxyl of the adenosine moiety of NAD to yield NADP. The chain is NAD kinase from Chlorobium limicola (strain DSM 245 / NBRC 103803 / 6330).